A 367-amino-acid chain; its full sequence is Peptide chain release factor 2 (367 aa).

Residue glutamine 254 is modified to N5-methylglutamine.

Belongs to the prokaryotic/mitochondrial release factor family. Methylated by PrmC. Methylation increases the termination efficiency of RF2.

The protein resides in the cytoplasm. In terms of biological role, peptide chain release factor 2 directs the termination of translation in response to the peptide chain termination codons UGA and UAA. This Leptospira interrogans serogroup Icterohaemorrhagiae serovar Lai (strain 56601) protein is Peptide chain release factor 2.